Consider the following 145-residue polypeptide: MTIDITEIMDLIPHRYPFLLVDKVVEIDPNKSITGIKNVTVNEPQFTGHFPARPVMPGVLMVEAMTQLAAILVAKSLGSTKNKEVFLMAIENSKFRKVVQPGDTMHIHATIDQQRANVWKFSSTVKVDGEMAAESKFTAMIKDKS.

Histidine 49 is a catalytic residue.

This sequence belongs to the thioester dehydratase family. FabZ subfamily.

It localises to the cytoplasm. The catalysed reaction is a (3R)-hydroxyacyl-[ACP] = a (2E)-enoyl-[ACP] + H2O. In terms of biological role, involved in unsaturated fatty acids biosynthesis. Catalyzes the dehydration of short chain beta-hydroxyacyl-ACPs and long chain saturated and unsaturated beta-hydroxyacyl-ACPs. This Rickettsia bellii (strain OSU 85-389) protein is 3-hydroxyacyl-[acyl-carrier-protein] dehydratase FabZ.